Consider the following 240-residue polypeptide: Ubiquinone biosynthesis O-methyltransferase (240 aa).

The S-adenosyl-L-methionine site is built by Arg-44, Gly-64, Asp-85, and Met-129.

This sequence belongs to the methyltransferase superfamily. UbiG/COQ3 family.

The catalysed reaction is a 3-demethylubiquinol + S-adenosyl-L-methionine = a ubiquinol + S-adenosyl-L-homocysteine + H(+). It carries out the reaction a 3-(all-trans-polyprenyl)benzene-1,2-diol + S-adenosyl-L-methionine = a 2-methoxy-6-(all-trans-polyprenyl)phenol + S-adenosyl-L-homocysteine + H(+). Its pathway is cofactor biosynthesis; ubiquinone biosynthesis. Functionally, O-methyltransferase that catalyzes the 2 O-methylation steps in the ubiquinone biosynthetic pathway. The chain is Ubiquinone biosynthesis O-methyltransferase from Escherichia coli O127:H6 (strain E2348/69 / EPEC).